Reading from the N-terminus, the 81-residue chain is Cytotoxin 3b (81 aa).

Positions 1-21 are cleaved as a signal peptide; sequence MKTLLLTLVVVTIVCLDLGYT. 4 disulfide bridges follow: Cys-24/Cys-42, Cys-35/Cys-59, Cys-63/Cys-74, and Cys-75/Cys-80.

Belongs to the three-finger toxin family. Short-chain subfamily. Type IA cytotoxin sub-subfamily. Monomer in solution; Homodimer and oligomer in the presence of negatively charged lipids forming a pore with a size ranging between 20 and 30 Angstroms. In terms of tissue distribution, expressed by the venom gland.

It is found in the secreted. It localises to the target cell membrane. In terms of biological role, shows cytolytic activity on many different cells by forming pore in lipid membranes. In vivo, increases heart rate or kills the animal by cardiac arrest. In addition, it binds to heparin with high affinity, interacts with Kv channel-interacting protein 1 (KCNIP1) in a calcium-independent manner, and binds to integrin alpha-V/beta-3 (ITGAV/ITGB3) with moderate affinity. The sequence is that of Cytotoxin 3b from Naja atra (Chinese cobra).